A 479-amino-acid polypeptide reads, in one-letter code: Lysosomal protective protein (479 aa).

Residues 1-27 (MFRAALWPPVLLLLQLLLLACAPGGEG) form the signal peptide. 4 cysteine pairs are disulfide-bonded: cysteine 87–cysteine 361, cysteine 239–cysteine 255, cysteine 240–cysteine 245, and cysteine 280–cysteine 330. Asparagine 144 carries an N-linked (GlcNAc...) asparagine glycan. The active site involves serine 177. N-linked (GlcNAc...) asparagine glycosylation is present at asparagine 332. Catalysis depends on residues aspartate 399 and histidine 456.

It belongs to the peptidase S10 family. Heterodimer of a 32 kDa chain and a 20 kDa chain; disulfide-linked.

It is found in the lysosome. It carries out the reaction Release of a C-terminal amino acid with broad specificity.. Protective protein appears to be essential for both the activity of beta-galactosidase and neuraminidase, it associates with these enzymes and exerts a protective function necessary for their stability and activity. This protein is also a carboxypeptidase and can deamidate tachykinins. The sequence is that of Lysosomal protective protein (CTSA) from Bos taurus (Bovine).